Reading from the N-terminus, the 299-residue chain is Pseudouridine-5'-phosphate glycosidase (299 aa).

E23 functions as the Proton donor in the catalytic mechanism. K84 and V104 together coordinate substrate. D136 is a binding site for Mn(2+). Substrate is bound at residue 138 to 140; it reads SAD. The Nucleophile role is filled by K157.

The protein belongs to the pseudouridine-5'-phosphate glycosidase family. Homotrimer. Mn(2+) is required as a cofactor.

The enzyme catalyses D-ribose 5-phosphate + uracil = psi-UMP + H2O. Its function is as follows. Catalyzes the reversible cleavage of pseudouridine 5'-phosphate (PsiMP) to ribose 5-phosphate and uracil. Functions biologically in the cleavage direction, as part of a pseudouridine degradation pathway. This chain is Pseudouridine-5'-phosphate glycosidase, found in Solibacter usitatus (strain Ellin6076).